The sequence spans 859 residues: MCGRNQLFVASLLASACLIYCVQYVTVFYGVPVWRNASIPLFCATKNRDTWGTIQCLPDNDDYQEIALNVTEAFDAWNNTVTEQAVEDVWSLFETSIKPCVKLTPLCVAMRCNSTTAKNTTSTPTTTTTANTTIGENSSCIRTDNCTGLGEEEMVDCQFNMTGLERDKKKLYNETWYSKDVVCESNDTKKEKTCYMNHCNTSVITESCDKHYWDTMRFRYCAPPGFALLRCNDTNYSGFEPNCSKVVAATCTRMMETQTSTWFGFNGTRAENRTYIYWHGRDNRTIISLNKFYNLTVHCKRPGNKTVVPITLMSGLVFHSQPINRRPRQAWCWFKGEWKEAMKEVKLTLAKHPRYKGTNDTEKIRFIAPGERSDPEVAYMWTNCRGEFLYCNMTWFLNWVENRTNQTQHNYVPCHIKQIINTWHKVGKNVYLPPREGQLTCNSTVTSIIANIDGGENQTNITFSAEVAELYRLELGDYKLIEVTPIGFAPTPVKRYSSAPVRNKRGVFVLGFLGFLTTAGAAMGAASLTLSAQSRTLLAGIVQQQQQLLDVVKRQQEMLRLTVWGTKNLQARVTAIEKYLKDQAQLNSWGCAFRQVCHTTVPWVNDTLTPDWNNMTWQEWEQRIRNLEANISESLEQAQIQQEKNMYELQKLNSWDVFGNWFDLTSWIKYIQYGVYIVVGIIVLRIVIYVVQMLSRLRKGYRPVFSSPPAYFQQIHIHKDREQPAREETEEDVGNSVGDNWWPWPIRYIHFLIRQLIRLLNRLYNICRDLLSRSFQTLQLISQSLRRALTAVRDWLRFNTAYLQYGGEWIQEAFRAFARATGETLTNAWRGFWGTLGQIGRGILAVPRRIRQGAEIALL.

Positions 1–24 are cleaved as a signal peptide; it reads MCGRNQLFVASLLASACLIYCVQY. The Extracellular portion of the chain corresponds to 25–673; it reads VTVFYGVPVW…LTSWIKYIQY (649 aa). N-linked (GlcNAc...) asparagine; by host glycosylation is present at Asn-36. An intrachain disulfide couples Cys-43 to Cys-56. 26 N-linked (GlcNAc...) asparagine; by host glycosylation sites follow: Asn-69, Asn-78, Asn-113, Asn-119, Asn-131, Asn-137, Asn-145, Asn-160, Asn-173, Asn-186, Asn-200, Asn-232, Asn-235, Asn-242, Asn-266, Asn-272, Asn-283, Asn-294, Asn-304, Asn-359, Asn-392, Asn-402, Asn-405, Asn-442, Asn-457, and Asn-460. 5 disulfide bridges follow: Cys-100-Cys-208, Cys-107-Cys-199, Cys-112-Cys-157, Cys-221-Cys-251, and Cys-231-Cys-243. The segment at 112 to 156 is V1; that stretch reads CNSTTAKNTTSTPTTTTTANTTIGENSSCIRTDNCTGLGEEEMVD. Residues 157–199 form a V2 region; sequence CQFNMTGLERDKKKLYNETWYSKDVVCESNDTKKEKTCYMNHC. Positions 299–331 are V3; the sequence is CKRPGNKTVVPITLMSGLVFHSQPINRRPRQAW. Residues Cys-299 and Cys-332 are joined by a disulfide bond. 2 cysteine pairs are disulfide-bonded: Cys-384/Cys-441 and Cys-391/Cys-414. Residues 391-414 form a V4 region; it reads CNMTWFLNWVENRTNQTQHNYVPC. The segment at 457-463 is V5; that stretch reads NQTNITF. The segment at 506 to 526 is fusion peptide; the sequence is GVFVLGFLGFLTTAGAAMGAA. The segment at 569–585 is immunosuppression; sequence LQARVTAIEKYLKDQAQ. Asn-605, Asn-614, and Asn-630 each carry an N-linked (GlcNAc...) asparagine; by host glycan. Residues 614–646 are a coiled coil; that stretch reads NMTWQEWEQRIRNLEANISESLEQAQIQQEKNM. An MPER; binding to GalCer region spans residues 651-672; that stretch reads KLNSWDVFGNWFDLTSWIKYIQ. A helical transmembrane segment spans residues 674 to 694; the sequence is GVYIVVGIIVLRIVIYVVQML. Topologically, residues 695–859 are cytoplasmic; that stretch reads SRLRKGYRPV…IRQGAEIALL (165 aa). Positions 701–704 match the YXXV motif; contains endocytosis signal motif; the sequence is YRPV. A lipid anchor (S-palmitoyl cysteine; by host) is attached at Cys-767. Positions 858–859 match the Di-leucine internalization motif motif; sequence LL.

The mature envelope protein (Env) consists of a homotrimer of non-covalently associated gp120-gp41 heterodimers. The resulting complex protrudes from the virus surface as a spike. There seems to be as few as 10 spikes on the average virion. Interacts with human CD4, CCR5 and CXCR4, to form a P4HB/PDI-CD4-CXCR4-gp120 complex. Gp120 also interacts with the C-type lectins CD209/DC-SIGN and CLEC4M/DC-SIGNR (collectively referred to as DC-SIGN(R)). Gp120 and gp41 interact with GalCer. In terms of assembly, the mature envelope protein (Env) consists of a homotrimer of non-covalently associated gp120-gp41 heterodimers. The resulting complex protrudes from the virus surface as a spike. There seems to be as few as 10 spikes on the average virion. Post-translationally, specific enzymatic cleavages in vivo yield mature proteins. Envelope glycoproteins are synthesized as an inactive precursor that is heavily N-glycosylated and processed likely by host cell furin in the Golgi to yield the mature SU and TM proteins. The cleavage site between SU and TM requires the minimal sequence [KR]-X-[KR]-R. Palmitoylation of the transmembrane protein and of Env polyprotein (prior to its proteolytic cleavage) is essential for their association with host cell membrane lipid rafts. Palmitoylation is therefore required for envelope trafficking to classical lipid rafts, but not for viral replication.

The protein localises to the virion membrane. The protein resides in the host cell membrane. It localises to the host endosome membrane. Its function is as follows. The surface protein gp120 (SU) attaches the virus to the host lymphoid cell by binding to the primary receptor CD4. This interaction induces a structural rearrangement creating a high affinity binding site for a chemokine coreceptor like CXCR4 and/or CCR5. This peculiar 2 stage receptor-interaction strategy allows gp120 to maintain the highly conserved coreceptor-binding site in a cryptic conformation, protected from neutralizing antibodies. Since CD4 also displays a binding site for the disulfide-isomerase P4HB/PDI, a P4HB/PDI-CD4-CXCR4-gp120 complex may form. In that complex, P4HB/PDI could reach and reduce gp120 disulfide bonds, causing major conformational changes in gp120. TXN, another PDI family member could also be involved in disulfide rearrangements in Env during fusion. These changes are transmitted to the transmembrane protein gp41 and are thought to activate its fusogenic potential by unmasking its fusion peptide. The surface protein gp120 is a ligand for CD209/DC-SIGN and CLEC4M/DC-SIGNR, which are respectively found on dendritic cells (DCs), and on endothelial cells of liver sinusoids and lymph node sinuses. These interactions allow capture of viral particles at mucosal surfaces by these cells and subsequent transmission to permissive cells. DCs are professional antigen presenting cells, critical for host immunity by inducing specific immune responses against a broad variety of pathogens. They act as sentinels in various tissues where they take up antigen, process it, and present it to T-cells following migration to lymphoid organs. HIV subverts the migration properties of dendritic cells to gain access to CD4+ T-cells in lymph nodes. Virus transmission to permissive T-cells occurs either in trans (without DCs infection, through viral capture and transmission), or in cis (following DCs productive infection, through the usual CD4-gp120 interaction), thereby inducing a robust infection. In trans infection, bound virions remain infectious over days and it is proposed that they are not degraded, but protected in non-lysosomal acidic organelles within the DCs close to the cell membrane thus contributing to the viral infectious potential during DCs' migration from the periphery to the lymphoid tissues. On arrival at lymphoid tissues, intact virions recycle back to DCs' cell surface allowing virus transmission to CD4+ T-cells. Virion capture also seems to lead to MHC-II-restricted viral antigen presentation, and probably to the activation of HIV-specific CD4+ cells. Functionally, the transmembrane protein gp41 (TM) acts as a class I viral fusion protein. Under the current model, the protein has at least 3 conformational states: pre-fusion native state, pre-hairpin intermediate state, and post-fusion hairpin state. During fusion of viral and target intracellular membranes, the coiled coil regions (heptad repeats) assume a trimer-of-hairpins structure, positioning the fusion peptide in close proximity to the C-terminal region of the ectodomain. The formation of this structure appears to drive apposition and subsequent fusion of viral and target cell membranes. Complete fusion occurs in host cell endosomes and is dynamin-dependent, however some lipid transfer might occur at the plasma membrane. The virus undergoes clathrin-dependent internalization long before endosomal fusion, thus minimizing the surface exposure of conserved viral epitopes during fusion and reducing the efficacy of inhibitors targeting these epitopes. Membranes fusion leads to delivery of the nucleocapsid into the cytoplasm. In terms of biological role, the envelope glycoprotein gp160 precursor down-modulates cell surface CD4 antigen by interacting with it in the endoplasmic reticulum and blocking its transport to the cell surface. Its function is as follows. The gp120-gp41 heterodimer seems to contribute to T-cell depletion during HIV-1 infection. The envelope glycoproteins expressed on the surface of infected cells induce apoptosis through an interaction with uninfected cells expressing the receptor (CD4) and the coreceptors CXCR4 or CCR5. This type of bystander killing may be obtained by at least three distinct mechanisms. First, the interaction between the 2 cells can induce cellular fusion followed by nuclear fusion within the syncytium. Syncytia are condemned to die from apoptosis. Second, the 2 interacting cells may not fuse entirely and simply exchange plasma membrane lipids, after a sort of hemifusion process, followed by rapid death. Third, it is possible that virus-infected cells, on the point of undergoing apoptosis, fuse with CD4-expressing cells, in which case apoptosis is rapidly transmitted from one cell to the other and thus occurs in a sort of contagious fashion. The gp120-gp41 heterodimer allows rapid transcytosis of the virus through CD4 negative cells such as simple epithelial monolayers of the intestinal, rectal and endocervical epithelial barriers. Both gp120 and gp41 specifically recognize glycosphingolipids galactosyl-ceramide (GalCer) or 3' sulfo-galactosyl-ceramide (GalS) present in the lipid rafts structures of epithelial cells. Binding to these alternative receptors allows the rapid transcytosis of the virus through the epithelial cells. This transcytotic vesicle-mediated transport of virions from the apical side to the basolateral side of the epithelial cells does not involve infection of the cells themselves. The sequence is that of Envelope glycoprotein gp160 (env) from Homo sapiens (Human).